We begin with the raw amino-acid sequence, 828 residues long: Periplasmic nitrate reductase (828 aa).

The segment at residues 1–31 (MKLSRRSFMKANAVAAAAAAAGLSVPGVARA) is a signal peptide (tat-type signal). The region spanning 39-95 (IKWDKAPCRFCGTGCGVLVGTQQGRVVACQGDPDAPVNRGLNCIKGYFLPKIMYGKD) is the 4Fe-4S Mo/W bis-MGD-type domain. [4Fe-4S] cluster is bound by residues Cys46, Cys49, Cys53, and Cys81. Mo-bis(molybdopterin guanine dinucleotide) is bound by residues Lys83, Gln150, Asn175, Cys179, 212–219 (WGANMAEM), 243–247 (STYQH), 262–264 (QSD), Met372, Gln376, Asn482, 508–509 (SD), Lys531, Asp558, and 718–727 (TGRVLEHWHT). A substrate-binding site is contributed by Phe794. Asn802 and Lys819 together coordinate Mo-bis(molybdopterin guanine dinucleotide).

Belongs to the prokaryotic molybdopterin-containing oxidoreductase family. NasA/NapA/NarB subfamily. In terms of assembly, component of the periplasmic nitrate reductase NapAB complex composed of NapA and NapB. It depends on [4Fe-4S] cluster as a cofactor. The cofactor is Mo-bis(molybdopterin guanine dinucleotide). Predicted to be exported by the Tat system. The position of the signal peptide cleavage has not been experimentally proven.

The protein resides in the periplasm. The enzyme catalyses 2 Fe(II)-[cytochrome] + nitrate + 2 H(+) = 2 Fe(III)-[cytochrome] + nitrite + H2O. Catalytic subunit of the periplasmic nitrate reductase complex NapAB. Receives electrons from NapB and catalyzes the reduction of nitrate to nitrite. In Escherichia coli O6:K15:H31 (strain 536 / UPEC), this protein is Periplasmic nitrate reductase.